A 220-amino-acid polypeptide reads, in one-letter code: ATP synthase subunit delta (220 aa).

Belongs to the ATPase delta chain family. As to quaternary structure, F-type ATPases have 2 components, F(1) - the catalytic core - and F(0) - the membrane proton channel. F(1) has five subunits: alpha(3), beta(3), gamma(1), delta(1), epsilon(1). F(0) has three main subunits: a(1), b(2) and c(10-14). The alpha and beta chains form an alternating ring which encloses part of the gamma chain. F(1) is attached to F(0) by a central stalk formed by the gamma and epsilon chains, while a peripheral stalk is formed by the delta and b chains.

The protein localises to the cell inner membrane. In terms of biological role, f(1)F(0) ATP synthase produces ATP from ADP in the presence of a proton or sodium gradient. F-type ATPases consist of two structural domains, F(1) containing the extramembraneous catalytic core and F(0) containing the membrane proton channel, linked together by a central stalk and a peripheral stalk. During catalysis, ATP synthesis in the catalytic domain of F(1) is coupled via a rotary mechanism of the central stalk subunits to proton translocation. This protein is part of the stalk that links CF(0) to CF(1). It either transmits conformational changes from CF(0) to CF(1) or is implicated in proton conduction. In Gluconobacter oxydans (strain 621H) (Gluconobacter suboxydans), this protein is ATP synthase subunit delta.